We begin with the raw amino-acid sequence, 477 residues long: Glutamate--tRNA ligase 1 (477 aa).

Residues 12–22 carry the 'HIGH' region motif; the sequence is PSPTGALHLGN. Positions 253–257 match the 'KMSKS' region motif; sequence PLSKR. Lysine 256 is an ATP binding site.

The protein belongs to the class-I aminoacyl-tRNA synthetase family. Glutamate--tRNA ligase type 1 subfamily. As to quaternary structure, monomer.

The protein resides in the cytoplasm. It catalyses the reaction tRNA(Glu) + L-glutamate + ATP = L-glutamyl-tRNA(Glu) + AMP + diphosphate. Functionally, catalyzes the attachment of glutamate to tRNA(Glu) in a two-step reaction: glutamate is first activated by ATP to form Glu-AMP and then transferred to the acceptor end of tRNA(Glu). The polypeptide is Glutamate--tRNA ligase 1 (Halorhodospira halophila (strain DSM 244 / SL1) (Ectothiorhodospira halophila (strain DSM 244 / SL1))).